A 382-amino-acid chain; its full sequence is V-type proton ATPase subunit C 1 (382 aa).

At T2 the chain carries N-acetylthreonine.

The protein belongs to the V-ATPase C subunit family. As to quaternary structure, V-ATPase is a heteromultimeric enzyme made up of two complexes: the ATP-hydrolytic V1 complex and the proton translocation V0 complex. The V1 complex consists of three catalytic AB heterodimers that form a heterohexamer, three peripheral stalks each consisting of EG heterodimers, one central rotor including subunits D and F, and the regulatory subunits C and H. The proton translocation complex V0 consists of the proton transport subunit a, a ring of proteolipid subunits c9c'', rotary subunit d, subunits e and f, and the accessory subunits ATP6AP1/Ac45 and ATP6AP2/PRR.

The protein resides in the cytoplasmic vesicle. The protein localises to the secretory vesicle. It is found in the synaptic vesicle membrane. Its subcellular location is the clathrin-coated vesicle membrane. Its function is as follows. Subunit of the V1 complex of vacuolar(H+)-ATPase (V-ATPase), a multisubunit enzyme composed of a peripheral complex (V1) that hydrolyzes ATP and a membrane integral complex (V0) that translocates protons. V-ATPase is responsible for acidifying and maintaining the pH of intracellular compartments and in some cell types, is targeted to the plasma membrane, where it is responsible for acidifying the extracellular environment. Subunit C is necessary for the assembly of the catalytic sector of the enzyme and is likely to have a specific function in its catalytic activity. The chain is V-type proton ATPase subunit C 1 (ATP6V1C1) from Macaca fascicularis (Crab-eating macaque).